Reading from the N-terminus, the 802-residue chain is Ribosomal protein S6 kinase alpha-5 (802 aa).

A compositionally biased stretch (gly residues) spans methionine 1–glycine 22. A disordered region spans residues methionine 1 to glutamate 23. A Protein kinase 1 domain is found at phenylalanine 49–phenylalanine 318. Residues leucine 55–valine 63 and lysine 81 each bind ATP. Residue aspartate 177 is the Proton acceptor of the active site. Serine 212 is subject to Phosphoserine; by autocatalysis. Positions glutamine 319 to asparagine 387 constitute an AGC-kinase C-terminal domain. At serine 360 the chain carries Phosphoserine; by MAPK1, MAPK3 and MAPK14. A phosphoserine; by autocatalysis mark is found at serine 376 and serine 381. The region spanning aspartate 426–leucine 687 is the Protein kinase 2 domain. ATP is bound by residues leucine 432–cysteine 440 and lysine 455. The active-site Proton acceptor is the aspartate 544. A Phosphothreonine; by MAPK1, MAPK3 and MAPK14 modification is found at threonine 581. 4 positions are modified to phosphoserine: serine 647, serine 657, serine 691, and serine 695. Threonine 700 carries the phosphothreonine; by MAPK1, MAPK3 and MAPK14 modification. Residues alanine 741–alanine 802 are disordered. Over residues threonine 749–threonine 779 the composition is skewed to low complexity. 3 positions are modified to phosphoserine; by autocatalysis: serine 750, serine 752, and serine 758. Residues leucine 780–alanine 802 show a composition bias toward polar residues. At serine 798 the chain carries Phosphoserine.

This sequence belongs to the protein kinase superfamily. AGC Ser/Thr protein kinase family. S6 kinase subfamily. Forms a complex with either MAPK1/ERK2 or MAPK3/ERK1 in quiescent cells which transiently dissociates following mitogenic stimulation. Also associates with MAPK14/p38-alpha. Activated RPS6KA5 associates with and phosphorylates the NF-kappa-B p65 subunit RELA. Interacts with CREBBP and EP300. Mg(2+) serves as cofactor. Post-translationally, ser-376 and Thr-581 phosphorylation is required for kinase activity. Ser-376 and Ser-212 are autophosphorylated by the C-terminal kinase domain, and their phosphorylation is essential for the catalytic activity of the N-terminal kinase domain. Phosphorylated at Ser-360, Thr-581 and Thr-700 by MAPK1/ERK2, MAPK3/ERK1 and MAPK14/p38-alpha. Autophosphorylated at Ser-750, Ser-752 and Ser-758 by the N-terminal kinase domain. In terms of processing, ubiquitinated. In terms of tissue distribution, widely expressed with high levels in heart, brain and placenta. Less abundant in lung, kidney and liver.

It is found in the nucleus. The protein localises to the cytoplasm. The catalysed reaction is L-seryl-[protein] + ATP = O-phospho-L-seryl-[protein] + ADP + H(+). It catalyses the reaction L-threonyl-[protein] + ATP = O-phospho-L-threonyl-[protein] + ADP + H(+). Activated by phosphorylation at Ser-360, Thr-581 and Thr-700 by MAPK1/ERK2, MAPK3/ERK1 and MAPK14/p38-alpha, and by further autophosphorylation of Ser-212, Ser-376 and Ser-381 by the activated C-terminal kinase domain. The active N-terminal kinase domain finally phosphorylates downstream substrates, as well as Ser-750, Ser-752 and Ser-758 in its own C-terminal region. Functionally, serine/threonine-protein kinase that is required for the mitogen or stress-induced phosphorylation of the transcription factors CREB1 and ATF1 and for the regulation of the transcription factors RELA, STAT3 and ETV1/ER81, and that contributes to gene activation by histone phosphorylation and functions in the regulation of inflammatory genes. Phosphorylates CREB1 and ATF1 in response to mitogenic or stress stimuli such as UV-C irradiation, epidermal growth factor (EGF) and anisomycin. Plays an essential role in the control of RELA transcriptional activity in response to TNF and upon glucocorticoid, associates in the cytoplasm with the glucocorticoid receptor NR3C1 and contributes to RELA inhibition and repression of inflammatory gene expression. In skeletal myoblasts is required for phosphorylation of RELA at 'Ser-276' during oxidative stress. In erythropoietin-stimulated cells, is necessary for the 'Ser-727' phosphorylation of STAT3 and regulation of its transcriptional potential. Phosphorylates ETV1/ER81 at 'Ser-191' and 'Ser-216', and thereby regulates its ability to stimulate transcription, which may be important during development and breast tumor formation. Directly represses transcription via phosphorylation of 'Ser-1' of histone H2A. Phosphorylates 'Ser-10' of histone H3 in response to mitogenics, stress stimuli and EGF, which results in the transcriptional activation of several immediate early genes, including proto-oncogenes c-fos/FOS and c-jun/JUN. May also phosphorylate 'Ser-28' of histone H3. Mediates the mitogen- and stress-induced phosphorylation of high mobility group protein 1 (HMGN1/HMG14). In lipopolysaccharide-stimulated primary macrophages, acts downstream of the Toll-like receptor TLR4 to limit the production of pro-inflammatory cytokines. Functions probably by inducing transcription of the MAP kinase phosphatase DUSP1 and the anti-inflammatory cytokine interleukin 10 (IL10), via CREB1 and ATF1 transcription factors. Plays a role in neuronal cell death by mediating the downstream effects of excitotoxic injury. Phosphorylates TRIM7 at 'Ser-107' in response to growth factor signaling via the MEK/ERK pathway, thereby stimulating its ubiquitin ligase activity. This Homo sapiens (Human) protein is Ribosomal protein S6 kinase alpha-5 (RPS6KA5).